The sequence spans 570 residues: 4-hydroxy-7-methoxy-3-oxo-3,4-dihydro-2H-1,4-benzoxazin-2-yl glucoside beta-D-glucosidase 1c, chloroplastic (570 aa).

The N-terminal 50 residues, 1–50 (MALLAAATLNPTTHLSIRSRAGHNSENLWLRSAASSQKSKGRFCNLTVRA), are a transit peptide targeting the chloroplast. A beta-D-glucoside is bound by residues Gln92, His194, and 239 to 240 (NE). Residue Glu240 is the Proton donor of the active site. Cys259 and Cys265 are disulfide-bonded. Residues Tyr383, Glu456, Trp504, 511–512 (EW), and Phe520 contribute to the a beta-D-glucoside site. Catalysis depends on Glu456, which acts as the Nucleophile.

Belongs to the glycosyl hydrolase 1 family. In terms of assembly, homo- and heterohexamers. Expressed in young seedlings early after germination.

The protein localises to the plastid. It localises to the chloroplast. It carries out the reaction Hydrolysis of terminal, non-reducing beta-D-glucosyl residues with release of beta-D-glucose.. The enzyme catalyses DIMBOA beta-D-glucoside + H2O = DIMBOA + D-glucose. It catalyses the reaction DIBOA beta-D-glucoside + H2O = DIBOA + D-glucose. Functionally, acts in defense of young plant parts against pests via the production of hydroxamic acids from hydroxamic acid glucosides. Enzymatic activity is highly correlated with plant growth. The preferred substrate is DIMBOA-beta-D-glucoside. This chain is 4-hydroxy-7-methoxy-3-oxo-3,4-dihydro-2H-1,4-benzoxazin-2-yl glucoside beta-D-glucosidase 1c, chloroplastic (GLU1C), found in Triticum aestivum (Wheat).